Here is a 374-residue protein sequence, read N- to C-terminus: Severin (374 aa).

Gelsolin-like repeat units lie at residues Phe58–Gly109, Glu180–Ala220, and Glu278–Lys369.

The protein belongs to the villin/gelsolin family.

Its function is as follows. Severin blocks the ends of F-actin and causes the fragmentation and depolymerization of actin filaments. This severin binds stably with actin both in a Ca(2+) dependent and a Ca(2+) independent manner. The polypeptide is Severin (AG8) (Echinococcus granulosus (Hydatid tapeworm)).